The sequence spans 228 residues: Triosephosphate isomerase (228 aa).

11–13 (NFK) lines the substrate pocket. Histidine 95 functions as the Electrophile in the catalytic mechanism. The active-site Proton acceptor is the glutamate 143. Substrate contacts are provided by residues isoleucine 148, glycine 183, and 204 to 205 (AS).

The protein belongs to the triosephosphate isomerase family. Homotetramer; dimer of dimers.

It localises to the cytoplasm. The catalysed reaction is D-glyceraldehyde 3-phosphate = dihydroxyacetone phosphate. Its pathway is carbohydrate biosynthesis; gluconeogenesis. It participates in carbohydrate degradation; glycolysis; D-glyceraldehyde 3-phosphate from glycerone phosphate: step 1/1. Its function is as follows. Involved in the gluconeogenesis. Catalyzes stereospecifically the conversion of dihydroxyacetone phosphate (DHAP) to D-glyceraldehyde-3-phosphate (G3P). This Pyrococcus abyssi (strain GE5 / Orsay) protein is Triosephosphate isomerase.